The following is a 250-amino-acid chain: Agamous-like MADS-box protein AGL8 homolog (250 aa).

Residues 3–57 (RGRVQLKRIENKINRQVTFSKRRSGLLKKAHEISVLCDAEVGLIVFSTKGKLFEY) enclose the MADS-box domain. In terms of domain architecture, K-box spans 88–178 (PGSWTLENAK…SKKVKEREKE (91 aa)). 2 disordered regions span residues 162–191 (QEQN…QNHE) and 206–241 (PHLG…TVMP). Residues 171–180 (KVKEREKEVE) are compositionally biased toward basic and acidic residues. Polar residues-rich tracts occupy residues 181-191 (QQNQWDQQNHE) and 226-240 (GNSS…NTVM).

It is found in the nucleus. Probable transcription factor. This chain is Agamous-like MADS-box protein AGL8 homolog (SCM1), found in Solanum commersonii (Commerson's wild potato).